A 148-amino-acid polypeptide reads, in one-letter code: UPF0756 membrane protein YeaL (148 aa).

The next 4 helical transmembrane spans lie at 14–34, 51–71, 86–106, and 121–141; these read ALGF…LIIV, LTVG…SGTL, LVAI…ITLM, and VLGV…AGLV.

It belongs to the UPF0756 family.

The protein resides in the cell membrane. In Salmonella choleraesuis (strain SC-B67), this protein is UPF0756 membrane protein YeaL.